Consider the following 131-residue polypeptide: Large ribosomal subunit protein bL12 (131 aa).

It belongs to the bacterial ribosomal protein bL12 family. Homodimer. Part of the ribosomal stalk of the 50S ribosomal subunit. Forms a multimeric L10(L12)X complex, where L10 forms an elongated spine to which 2 to 4 L12 dimers bind in a sequential fashion. Binds GTP-bound translation factors.

Functionally, forms part of the ribosomal stalk which helps the ribosome interact with GTP-bound translation factors. Is thus essential for accurate translation. The polypeptide is Large ribosomal subunit protein bL12 (Prochlorococcus marinus (strain MIT 9313)).